The primary structure comprises 536 residues: CTP synthase (536 aa).

The segment at 1-267 is amidoligase domain; that stretch reads MTKFIFVTGG…DDIVIKRLQL (267 aa). Ser-13 contacts CTP. Ser-13 contributes to the UTP binding site. Residue 14–19 participates in ATP binding; the sequence is SLGKGI. Residue Tyr-54 coordinates L-glutamine. Asp-71 is an ATP binding site. Mg(2+) is bound by residues Asp-71 and Glu-141. CTP contacts are provided by residues 148–150, 188–193, and Lys-224; these read DIE and KTKPTQ. Residues 188–193 and Lys-224 each bind UTP; that span reads KTKPTQ. 240 to 242 is a binding site for ATP; the sequence is RDA. The Glutamine amidotransferase type-1 domain occupies 293-535; that stretch reads TIGLVGKYVS…IEASLKYQQN (243 aa). Gly-355 contacts L-glutamine. Residue Cys-382 is the Nucleophile; for glutamine hydrolysis of the active site. L-glutamine-binding positions include 383–386, Glu-406, and Arg-463; that span reads LGMQ. Catalysis depends on residues His-508 and Glu-510.

Belongs to the CTP synthase family. Homotetramer.

It catalyses the reaction UTP + L-glutamine + ATP + H2O = CTP + L-glutamate + ADP + phosphate + 2 H(+). The catalysed reaction is L-glutamine + H2O = L-glutamate + NH4(+). It carries out the reaction UTP + NH4(+) + ATP = CTP + ADP + phosphate + 2 H(+). It participates in pyrimidine metabolism; CTP biosynthesis via de novo pathway; CTP from UDP: step 2/2. Its activity is regulated as follows. Allosterically activated by GTP, when glutamine is the substrate; GTP has no effect on the reaction when ammonia is the substrate. The allosteric effector GTP functions by stabilizing the protein conformation that binds the tetrahedral intermediate(s) formed during glutamine hydrolysis. Inhibited by the product CTP, via allosteric rather than competitive inhibition. Catalyzes the ATP-dependent amination of UTP to CTP with either L-glutamine or ammonia as the source of nitrogen. Regulates intracellular CTP levels through interactions with the four ribonucleotide triphosphates. This is CTP synthase from Staphylococcus aureus (strain COL).